We begin with the raw amino-acid sequence, 470 residues long: N amino acid transport system protein (470 aa).

Residues 1 to 11 (MDSQYETKKND) are compositionally biased toward basic and acidic residues. Positions 1–21 (MDSQYETKKNDPNAIMPYPES) are disordered. Over 1–56 (MDSQYETKKNDPNAIMPYPESNDEHVGEVRGLGGGIMDKEPEAQEGHAKFHRLGWK) the chain is Extracellular. A run of 2 helical transmembrane segments spans residues 57 to 77 (RLTVVLIVEAIALGSLSLPGA) and 78 to 98 (FATLGMVPGVILSVGMGLICI). Over 99-131 (YTAHVIGQTKLKHPEIAHYADVGRVMFGRWGYE) the chain is Extracellular. A helical membrane pass occupies residues 132–152 (IISFMFVLQLIFIVGSHVLTG). Topologically, residues 153–168 (TIMWGTITDNGNGTCS) are cytoplasmic. A run of 2 helical transmembrane segments spans residues 169-189 (LVFGIVSAIILFLLAIPPSFA) and 191-211 (VAILGYIDFVSICAAILITMI). The Cytoplasmic segment spans residues 212–236 (ATGIRSSHQEGGLAAVPWSCWPKED). The chain crosses the membrane as a helical span at residues 237–257 (LSLAEGFIAVSNIVFAYSFAM). The Extracellular segment spans residues 258–275 (CQFSFMDEMHTPSDYKKS). The chain crosses the membrane as a helical span at residues 276–296 (IVALGLIEIFIYTVTGGVVYA). The Cytoplasmic portion of the chain corresponds to 297–316 (FVGPEVQSPALLSAGPLLAK). Residues 317 to 337 (VAFGIALPVIFISGSINTVVV) form a helical membrane-spanning segment. Topologically, residues 338 to 357 (SRYLIERIWPNNVIRYVNTP) are extracellular. Residues 358–378 (AGWMVWLGFDFGITLIAWVIA) form a helical membrane-spanning segment. Over 379–386 (EAIPFFSD) the chain is Cytoplasmic. Residues 387-407 (LLAICSALFISGFSFYFPALM) form a helical membrane-spanning segment. At 408–427 (YFKITRNDAKSQGKKYFLDA) the chain is on the extracellular side. Residues 428–448 (LNMLCFVIGMGILGIGTYAAI) traverse the membrane as a helical segment. Residues 449–470 (QDIMDRYDHGKVSKPYSCAPLA) lie on the Cytoplasmic side of the membrane.

It belongs to the amino acid/polyamine transporter 2 family.

It is found in the membrane. Required for the transport of neutral aliphatic and aromatic amino acids via the N system. The polypeptide is N amino acid transport system protein (mtr) (Neurospora crassa (strain ATCC 24698 / 74-OR23-1A / CBS 708.71 / DSM 1257 / FGSC 987)).